The following is a 198-amino-acid chain: Ribonuclease HII (198 aa).

The 185-residue stretch at 14-198 (GVIAGVDEVG…KNFAPISRAL (185 aa)) folds into the RNase H type-2 domain. Residues aspartate 20, glutamate 21, and aspartate 112 each coordinate a divalent metal cation.

The protein belongs to the RNase HII family. Mn(2+) serves as cofactor. It depends on Mg(2+) as a cofactor.

Its subcellular location is the cytoplasm. It catalyses the reaction Endonucleolytic cleavage to 5'-phosphomonoester.. In terms of biological role, endonuclease that specifically degrades the RNA of RNA-DNA hybrids. This Wolbachia pipientis wMel protein is Ribonuclease HII.